The sequence spans 473 residues: ATP synthase subunit beta (473 aa).

ATP is bound at residue 158–165 (GGAGVGKT).

This sequence belongs to the ATPase alpha/beta chains family. As to quaternary structure, F-type ATPases have 2 components, CF(1) - the catalytic core - and CF(0) - the membrane proton channel. CF(1) has five subunits: alpha(3), beta(3), gamma(1), delta(1), epsilon(1). CF(0) has three main subunits: a(1), b(2) and c(9-12). The alpha and beta chains form an alternating ring which encloses part of the gamma chain. CF(1) is attached to CF(0) by a central stalk formed by the gamma and epsilon chains, while a peripheral stalk is formed by the delta and b chains.

The protein localises to the cell membrane. It carries out the reaction ATP + H2O + 4 H(+)(in) = ADP + phosphate + 5 H(+)(out). In terms of biological role, produces ATP from ADP in the presence of a proton gradient across the membrane. The catalytic sites are hosted primarily by the beta subunits. This Anoxybacillus flavithermus (strain DSM 21510 / WK1) protein is ATP synthase subunit beta.